A 269-amino-acid chain; its full sequence is Intron-associated endonuclease 3 (269 aa).

In terms of biological role, this endonuclease is specific to the nrdB gene splice junction and is involved in intron homing. The sequence is that of Intron-associated endonuclease 3 (ITEVIIIR) from Enterobacteria phage RB3 (Bacteriophage RB3).